The primary structure comprises 121 residues: Protein p14.5 (121 aa).

Ala2 is subject to N-acetylalanine; by host. The interval Ser84–Lys121 is disordered. Over residues Lys104–Lys121 the composition is skewed to basic residues.

The protein belongs to the asfivirus structural protein p14.5 family. Interacts with the major capsid protein. Interacts with host IRF3; this interaction interferes with the recruitment of IRF3 to TBK1. In terms of processing, acetylated.

The protein localises to the virion. In terms of biological role, structural protein required for transport of intracellular particles from the assembly sites to the plasma membrane. Binds to both ssDNA and dsDNA. Suppressed the activation of the cGAS/STING pathway by interfering with the recruitment of IRF3 to TBK1, which in turn suppresses IRF3 phosphorylation, decreasing interferon production. This is Protein p14.5 from African swine fever virus (isolate Pig/Kenya/KEN-50/1950) (ASFV).